The following is a 338-amino-acid chain: MLFERVVRPTLFRLKGGDAEAAHEFAVRRLAGLARMPAALAVLRARYGVSAPRTVFGLRFPNPVGLAAGMDKDGLALPAWPALGFGFVEVGTVTAHPQPGNPRPRLFRLPDSGAVVNRMGFNNAGAGALAARLAALPRPLGVPLGISLGKSRITPLEEAVEDYQTSYRALREYGDYFAVNVSSPNTPGLRELQDRAHLDALLAALVGEKPILVKIAPDLPEPAIAELLEVCLARGVAGVIATNTTLARDGLAPADQAGGAEAGGLSGRPLADRAREVVAFVHRETDGRLPIVGVGGIVTPDDAGRMFDAGASLVQLYTGFVYRGPALVRAAAAAARTP.

FMN-binding positions include 68-72 (AGMDK) and threonine 92. A substrate-binding site is contributed by lysine 72. 117 to 121 (NRMGF) lines the substrate pocket. FMN is bound by residues serine 147 and asparagine 180. Asparagine 180 serves as a coordination point for substrate. Catalysis depends on serine 183, which acts as the Nucleophile. Asparagine 185 contributes to the substrate binding site. The FMN site is built by lysine 214 and threonine 242. Position 243-244 (243-244 (NT)) interacts with substrate. FMN-binding positions include glycine 267, glycine 296, and 317–318 (YT).

It belongs to the dihydroorotate dehydrogenase family. Type 2 subfamily. As to quaternary structure, monomer. The cofactor is FMN.

The protein localises to the cell membrane. The enzyme catalyses (S)-dihydroorotate + a quinone = orotate + a quinol. It functions in the pathway pyrimidine metabolism; UMP biosynthesis via de novo pathway; orotate from (S)-dihydroorotate (quinone route): step 1/1. Its function is as follows. Catalyzes the conversion of dihydroorotate to orotate with quinone as electron acceptor. The protein is Dihydroorotate dehydrogenase (quinone) of Salinispora arenicola (strain CNS-205).